The following is a 638-amino-acid chain: 1-deoxy-D-xylulose-5-phosphate synthase (638 aa).

Thiamine diphosphate is bound by residues histidine 79 and 120–122 (AHS). Position 151 (aspartate 151) interacts with Mg(2+). Thiamine diphosphate contacts are provided by residues 152–153 (GA), asparagine 180, tyrosine 289, and glutamate 371. Asparagine 180 lines the Mg(2+) pocket.

It belongs to the transketolase family. DXPS subfamily. As to quaternary structure, homodimer. The cofactor is Mg(2+). Requires thiamine diphosphate as cofactor.

The enzyme catalyses D-glyceraldehyde 3-phosphate + pyruvate + H(+) = 1-deoxy-D-xylulose 5-phosphate + CO2. Its pathway is metabolic intermediate biosynthesis; 1-deoxy-D-xylulose 5-phosphate biosynthesis; 1-deoxy-D-xylulose 5-phosphate from D-glyceraldehyde 3-phosphate and pyruvate: step 1/1. Its function is as follows. Catalyzes the acyloin condensation reaction between C atoms 2 and 3 of pyruvate and glyceraldehyde 3-phosphate to yield 1-deoxy-D-xylulose-5-phosphate (DXP). The chain is 1-deoxy-D-xylulose-5-phosphate synthase from Rhizobium rhizogenes (strain K84 / ATCC BAA-868) (Agrobacterium radiobacter).